The chain runs to 761 residues: Elongation factor G, mitochondrial (761 aa).

A mitochondrion-targeting transit peptide spans 1 to 33 (MTSVLRGVLKTHLPRTLTLPRCARNFQTTTFLR). The region spanning 66 to 347 (TRLRNIGISA…SVVDYLPQPN (282 aa)) is the tr-type G domain. Residues 75 to 82 (AHIDSGKT), 146 to 150 (DTPGH), and 200 to 203 (NKMD) contribute to the GTP site.

The protein belongs to the TRAFAC class translation factor GTPase superfamily. Classic translation factor GTPase family. EF-G/EF-2 subfamily.

The protein resides in the mitochondrion. It functions in the pathway protein biosynthesis; polypeptide chain elongation. In terms of biological role, mitochondrial GTPase that catalyzes the GTP-dependent ribosomal translocation step during translation elongation. During this step, the ribosome changes from the pre-translocational (PRE) to the post-translocational (POST) state as the newly formed A-site-bound peptidyl-tRNA and P-site-bound deacylated tRNA move to the P and E sites, respectively. Catalyzes the coordinated movement of the two tRNA molecules, the mRNA and conformational changes in the ribosome. This Candida dubliniensis (strain CD36 / ATCC MYA-646 / CBS 7987 / NCPF 3949 / NRRL Y-17841) (Yeast) protein is Elongation factor G, mitochondrial.